A 352-amino-acid chain; its full sequence is C5a anaphylatoxin chemotactic receptor 1 (352 aa).

Residues 1-11 (MDPISNDSSEI) show a composition bias toward polar residues. The segment at 1–20 (MDPISNDSSEITYDYSDGTP) is disordered. The Extracellular segment spans residues 1–38 (MDPISNDSSEITYDYSDGTPNPDMPADGVYIPKMEPGD). Asparagine 6 carries an N-linked (GlcNAc...) asparagine glycan. Tyrosine 13 and tyrosine 15 each carry sulfotyrosine. Residues 39-65 (IAALIIYLAVFLVGVTGNALVVWVTAF) form a helical membrane-spanning segment. Residues 66–70 (EAKRT) are Cytoplasmic-facing. The helical transmembrane segment at 71-94 (VNAIWFLNLAVADLLSCLALPILF) threads the bilayer. The Extracellular portion of the chain corresponds to 95–111 (TSIVKHNHWPFGDQACI). Cysteine 110 and cysteine 189 are joined by a disulfide. A helical membrane pass occupies residues 112 to 133 (VLPSLILLNMYSSILLLATISA). The Cytoplasmic portion of the chain corresponds to 134-154 (DRFLLVFKPIWCQKFRRPGLA). Residues 155–175 (WMACGVTWVLALLLTIPSFVF) form a helical membrane-spanning segment. The Extracellular segment spans residues 176–202 (RRIHKDPYSDSILCNIDYSKGPFFIEK). A helical transmembrane segment spans residues 203–228 (AIAILRLMVGFVLPLLTLNICYTFLL). Topologically, residues 229–244 (IRTWSRKATRSTKTLK) are cytoplasmic. The chain crosses the membrane as a helical span at residues 245 to 267 (VVMAVVTCFFVFWLPYQVTGVIL). Residues 268–284 (AWLPRSSSTFQSVERLN) lie on the Extracellular side of the membrane. Residues 285 to 305 (SLCVSLAYINCCVNPIIYVMA) traverse the membrane as a helical segment. The Cytoplasmic segment spans residues 306–352 (GQGFHGRLRRSLPSIIRNVLSEDSLGRDSKSFTRSTMDTSTQKSQAV). Serine 316, serine 319, serine 326, serine 329, serine 334, serine 336, and serine 340 each carry phosphoserine. Positions 332 to 352 (RDSKSFTRSTMDTSTQKSQAV) are disordered. Over residues 337 to 352 (FTRSTMDTSTQKSQAV) the composition is skewed to polar residues.

The protein belongs to the G-protein coupled receptor 1 family. Homodimer. May also form higher-order oligomers. Interacts (when phosphorylated) with ARRB1 and ARRB2; the interaction is associated with internalization of C5aR. Sulfation plays a critical role in the association of C5aR with C5a, but no significant role in the ability of the receptor to transduce a signal and mobilize calcium in response to a small peptide agonist. In terms of processing, phosphorylated on serine residues in response to C5a binding, resulting in internalization of the receptor and short-term desensitization to the ligand.

The protein localises to the cell membrane. Its subcellular location is the cytoplasmic vesicle. Functionally, receptor for the chemotactic and inflammatory peptide anaphylatoxin C5a. The ligand interacts with at least two sites on the receptor: a high-affinity site on the extracellular N-terminus, and a second site in the transmembrane region which activates downstream signaling events. Receptor activation stimulates chemotaxis, granule enzyme release, intracellular calcium release and superoxide anion production. The sequence is that of C5a anaphylatoxin chemotactic receptor 1 (C5ar1) from Rattus norvegicus (Rat).